The chain runs to 612 residues: Zinc metalloproteinase-disintegrin-like 8 (612 aa).

The first 20 residues, 1 to 20, serve as a signal peptide directing secretion; that stretch reads MIQVLLVTICLAVFPYQGSS. Residues 21-189 constitute a propeptide that is removed on maturation; the sequence is IILGSGNVND…KKASQLNLTP (169 aa). The Peptidase M12B domain maps to 199 to 395; sequence KYIELVIVAD…NRPPCILNKP (197 aa). Residue Glu-202 participates in Ca(2+) binding. The N-linked (GlcNAc...) asparagine glycan is linked to Asn-218. Asp-286 contacts Ca(2+). 3 cysteine pairs are disulfide-bonded: Cys-310-Cys-390, Cys-350-Cys-374, and Cys-352-Cys-357. A Zn(2+)-binding site is contributed by His-335. Glu-336 is a catalytic residue. Zn(2+) contacts are provided by His-339 and His-345. Ca(2+) is bound by residues Cys-390, Asn-393, Val-405, Asn-408, Phe-410, Glu-412, Glu-415, and Asp-418. A Disintegrin domain is found at 403–489; sequence PPVCGNYFVE…DCPTDDFQRN (87 aa). 14 cysteine pairs are disulfide-bonded: Cys-406/Cys-435, Cys-417/Cys-430, Cys-419/Cys-425, Cys-429/Cys-452, Cys-443/Cys-449, Cys-448/Cys-474, Cys-461/Cys-481, Cys-468/Cys-500, Cys-493/Cys-505, Cys-512/Cys-562, Cys-527/Cys-573, Cys-540/Cys-550, Cys-557/Cys-599, and Cys-593/Cys-605. The D/ECD-tripeptide signature appears at 467–469; sequence ECD. The N-linked (GlcNAc...) asparagine glycan is linked to Asn-502.

Belongs to the venom metalloproteinase (M12B) family. P-III subfamily. Zn(2+) serves as cofactor. Expressed by the venom gland.

It is found in the secreted. Functionally, snake venom metalloproteinase that impairs hemostasis in the envenomed animal. In Crotalus adamanteus (Eastern diamondback rattlesnake), this protein is Zinc metalloproteinase-disintegrin-like 8.